Here is a 213-residue protein sequence, read N- to C-terminus: NADH-quinone oxidoreductase subunit I (213 aa).

2 4Fe-4S ferredoxin-type domains span residues 74–103 (RFIE…METS) and 113–142 (GNYS…HGIE). Cys-83, Cys-86, Cys-89, Cys-93, Cys-122, Cys-125, Cys-128, and Cys-132 together coordinate [4Fe-4S] cluster.

It belongs to the complex I 23 kDa subunit family. In terms of assembly, NDH-1 is composed of 14 different subunits. Subunits NuoA, H, J, K, L, M, N constitute the membrane sector of the complex. [4Fe-4S] cluster serves as cofactor.

It is found in the cell inner membrane. The catalysed reaction is a quinone + NADH + 5 H(+)(in) = a quinol + NAD(+) + 4 H(+)(out). Its function is as follows. NDH-1 shuttles electrons from NADH, via FMN and iron-sulfur (Fe-S) centers, to quinones in the respiratory chain. The immediate electron acceptor for the enzyme in this species is believed to be ubiquinone. Couples the redox reaction to proton translocation (for every two electrons transferred, four hydrogen ions are translocated across the cytoplasmic membrane), and thus conserves the redox energy in a proton gradient. This chain is NADH-quinone oxidoreductase subunit I, found in Campylobacter jejuni subsp. doylei (strain ATCC BAA-1458 / RM4099 / 269.97).